A 131-amino-acid chain; its full sequence is Small ribosomal subunit protein uS8 (131 aa).

The protein belongs to the universal ribosomal protein uS8 family. Part of the 30S ribosomal subunit. Contacts proteins S5 and S12.

Its function is as follows. One of the primary rRNA binding proteins, it binds directly to 16S rRNA central domain where it helps coordinate assembly of the platform of the 30S subunit. The chain is Small ribosomal subunit protein uS8 from Chromobacterium violaceum (strain ATCC 12472 / DSM 30191 / JCM 1249 / CCUG 213 / NBRC 12614 / NCIMB 9131 / NCTC 9757 / MK).